The following is a 65-amino-acid chain: Potassium channel toxin alpha-KTx 12.6 (65 aa).

Positions 1 to 22 (MKMKIFIITIVIALFITSIVEA) are cleaved as a signal peptide. Intrachain disulfides connect C30/C51, C36/C56, and C40/C58.

The protein belongs to the short scorpion toxin superfamily. Potassium channel inhibitor family. Alpha-KTx 12 subfamily. Expressed by the venom gland.

Its subcellular location is the secreted. Inhibits voltage-gated potassium channels. The chain is Potassium channel toxin alpha-KTx 12.6 from Lychas mucronatus (Chinese swimming scorpion).